Here is a 144-residue protein sequence, read N- to C-terminus: Large ribosomal subunit protein uL16 (144 aa).

Belongs to the universal ribosomal protein uL16 family. Part of the 50S ribosomal subunit.

Binds 23S rRNA and is also seen to make contacts with the A and possibly P site tRNAs. The polypeptide is Large ribosomal subunit protein uL16 (Clostridium botulinum (strain Alaska E43 / Type E3)).